A 1060-amino-acid polypeptide reads, in one-letter code: Carbamoyl phosphate synthase large chain (1060 aa).

The carboxyphosphate synthetic domain stretch occupies residues 1–401 (MPKRQDIHKI…SLLKAVRSLE (401 aa)). ATP-binding residues include R129, R169, G175, G176, R208, I210, E215, G241, V242, H243, Q284, and E298. Residues 133-327 (KNLMQKLHEP…IAKMAAKIAV (195 aa)) form the ATP-grasp 1 domain. The Mg(2+) site is built by Q284, E298, and N300. Q284, E298, and N300 together coordinate Mn(2+). The segment at 402 to 546 (VGLIHPERPA…YSTYESSTES (145 aa)) is oligomerization domain. The carbamoyl phosphate synthetic domain stretch occupies residues 547-929 (VKSDKPSVLV…ALYKAFEAAG (383 aa)). The ATP-grasp 2 domain maps to 671–861 (DQVIKSLKLP…LAQVATLAIL (191 aa)). 10 residues coordinate ATP: R707, H746, L748, E752, G777, I778, H779, S780, Q820, and E832. Positions 820, 832, and 834 each coordinate Mg(2+). Residues Q820, E832, and N834 each coordinate Mn(2+). The region spanning 930–1060 (MHLPQFGRAL…QAFSISPIKS (131 aa)) is the MGS-like domain. Residues 930–1060 (MHLPQFGRAL…QAFSISPIKS (131 aa)) are allosteric domain.

It belongs to the CarB family. As to quaternary structure, composed of two chains; the small (or glutamine) chain promotes the hydrolysis of glutamine to ammonia, which is used by the large (or ammonia) chain to synthesize carbamoyl phosphate. Tetramer of heterodimers (alpha,beta)4. It depends on Mg(2+) as a cofactor. Requires Mn(2+) as cofactor.

It carries out the reaction hydrogencarbonate + L-glutamine + 2 ATP + H2O = carbamoyl phosphate + L-glutamate + 2 ADP + phosphate + 2 H(+). The enzyme catalyses hydrogencarbonate + NH4(+) + 2 ATP = carbamoyl phosphate + 2 ADP + phosphate + 2 H(+). It functions in the pathway amino-acid biosynthesis; L-arginine biosynthesis; carbamoyl phosphate from bicarbonate: step 1/1. The protein operates within pyrimidine metabolism; UMP biosynthesis via de novo pathway; (S)-dihydroorotate from bicarbonate: step 1/3. Functionally, large subunit of the glutamine-dependent carbamoyl phosphate synthetase (CPSase). CPSase catalyzes the formation of carbamoyl phosphate from the ammonia moiety of glutamine, carbonate, and phosphate donated by ATP, constituting the first step of 2 biosynthetic pathways, one leading to arginine and/or urea and the other to pyrimidine nucleotides. The large subunit (synthetase) binds the substrates ammonia (free or transferred from glutamine from the small subunit), hydrogencarbonate and ATP and carries out an ATP-coupled ligase reaction, activating hydrogencarbonate by forming carboxy phosphate which reacts with ammonia to form carbamoyl phosphate. The sequence is that of Carbamoyl phosphate synthase large chain from Lacticaseibacillus casei (strain BL23) (Lactobacillus casei).